A 231-amino-acid chain; its full sequence is Orotidine 5'-phosphate decarboxylase (231 aa).

Residues Asp9, Lys34, 62–71, Thr117, Arg179, Gln188, Gly208, and Arg209 each bind substrate; that span reads DLKLHDIPSV. Residue Lys64 is the Proton donor of the active site.

This sequence belongs to the OMP decarboxylase family. Type 1 subfamily. Homodimer.

The catalysed reaction is orotidine 5'-phosphate + H(+) = UMP + CO2. It participates in pyrimidine metabolism; UMP biosynthesis via de novo pathway; UMP from orotate: step 2/2. In terms of biological role, catalyzes the decarboxylation of orotidine 5'-monophosphate (OMP) to uridine 5'-monophosphate (UMP). This is Orotidine 5'-phosphate decarboxylase from Aquifex aeolicus (strain VF5).